The chain runs to 447 residues: BAG family molecular chaperone regulator 5 (447 aa).

BAG domains lie at 9 to 86 (SISR…EQNA), 95 to 167 (QNIF…EDCM), 182 to 260 (SVAK…DLEE), 275 to 350 (SILK…DLKE), and 365 to 442 (SHKA…DLKS).

As to quaternary structure, binds to the ATPase domain of HSP/HSP70 chaperones. Binds PRKN. Interacts with HSPA8 and JPH2. Expressed in the heart.

Co-chaperone for HSP/HSP70 proteins. It functions as a nucleotide-exchange factor promoting the release of ADP from HSP70, thereby activating HSP70-mediated protein refolding. Has an essential role in maintaining proteostasis at junctional membrane complexes (JMC), where it may function as a scaffold between the HSPA8 chaperone and JMC proteins enabling correct, HSPA8-dependent JMC protein folding. Inhibits both auto-ubiquitination of PRKN and ubiquitination of target proteins by PRKN. In Homo sapiens (Human), this protein is BAG family molecular chaperone regulator 5 (BAG5).